The sequence spans 358 residues: Isopentenyl-diphosphate delta-isomerase (358 aa).

Residue 12-13 coordinates substrate; the sequence is RK. FMN contacts are provided by residues 69–71, S99, and N128; that span reads AMT. Residue Q158 participates in substrate binding. Position 159 (E159) interacts with Mg(2+). FMN-binding positions include K190, T220, 267-269, and 288-289; these read GIR and AG.

The protein belongs to the IPP isomerase type 2 family. Homooctamer. Dimer of tetramers. Requires FMN as cofactor. It depends on NADPH as a cofactor. Mg(2+) is required as a cofactor.

It is found in the cytoplasm. The enzyme catalyses isopentenyl diphosphate = dimethylallyl diphosphate. Its function is as follows. Involved in the biosynthesis of isoprenoids. Catalyzes the 1,3-allylic rearrangement of the homoallylic substrate isopentenyl (IPP) to its allylic isomer, dimethylallyl diphosphate (DMAPP). The sequence is that of Isopentenyl-diphosphate delta-isomerase from Listeria monocytogenes serotype 4a (strain HCC23).